The primary structure comprises 325 residues: Collagen alpha-1(IX) chain (325 aa).

Low complexity predominate over residues 1-54 (PGQLGNSGKPGQQGPPGEVGPRGPRGLPGSRGPVGPEGSPGIPGKLGPLGSPGL). Disordered regions lie at residues 1-163 (PGQL…APTD) and 187-325 (RPDT…GPDK). The span at 198–208 (RPGPPGPPGPP) shows a compositional bias: pro residues. A compositionally biased stretch (basic and acidic residues) spans 237–249 (PKGDLGEKGERGP). A compositionally biased stretch (pro residues) spans 292-304 (VPGPPGPPGPPGF).

Belongs to the fibril-associated collagens with interrupted helices (FACIT) family. In terms of assembly, heterotrimer of an alpha 1(IX), an alpha 2(IX) and an alpha 3(IX) chain. Post-translationally, covalently linked to the telopeptides of type II collagen by lysine-derived cross-links. Prolines at the third position of the tripeptide repeating unit (G-X-Y) are hydroxylated in some or all of the chains.

The protein localises to the secreted. It localises to the extracellular space. The protein resides in the extracellular matrix. Its function is as follows. Structural component of hyaline cartilage and vitreous of the eye. The sequence is that of Collagen alpha-1(IX) chain (Col9a1) from Rattus norvegicus (Rat).